Consider the following 448-residue polypeptide: tRNA-2-methylthio-N(6)-dimethylallyladenosine synthase (448 aa).

Residues 7–123 (RSFYIHTFGC…LPALIGDAEE (117 aa)) enclose the MTTase N-terminal domain. 6 residues coordinate [4Fe-4S] cluster: C16, C52, C86, C159, C163, and C166. The Radical SAM core domain maps to 145–375 (REVGVGAFVP…IDLQLSISAE (231 aa)). The TRAM domain occupies 378-441 (QEAVGSVVDV…SATLTGVNQG (64 aa)).

Belongs to the methylthiotransferase family. MiaB subfamily. In terms of assembly, monomer. It depends on [4Fe-4S] cluster as a cofactor.

It localises to the cytoplasm. It carries out the reaction N(6)-dimethylallyladenosine(37) in tRNA + (sulfur carrier)-SH + AH2 + 2 S-adenosyl-L-methionine = 2-methylsulfanyl-N(6)-dimethylallyladenosine(37) in tRNA + (sulfur carrier)-H + 5'-deoxyadenosine + L-methionine + A + S-adenosyl-L-homocysteine + 2 H(+). Functionally, catalyzes the methylthiolation of N6-(dimethylallyl)adenosine (i(6)A), leading to the formation of 2-methylthio-N6-(dimethylallyl)adenosine (ms(2)i(6)A) at position 37 in tRNAs that read codons beginning with uridine. This is tRNA-2-methylthio-N(6)-dimethylallyladenosine synthase from Chlorobium phaeovibrioides (strain DSM 265 / 1930) (Prosthecochloris vibrioformis (strain DSM 265)).